Reading from the N-terminus, the 130-residue chain is Small ribosomal subunit protein uS11 (130 aa).

It belongs to the universal ribosomal protein uS11 family. As to quaternary structure, part of the 30S ribosomal subunit. Interacts with proteins S7 and S18. Binds to IF-3.

Its function is as follows. Located on the platform of the 30S subunit, it bridges several disparate RNA helices of the 16S rRNA. Forms part of the Shine-Dalgarno cleft in the 70S ribosome. In Alteromonas mediterranea (strain DSM 17117 / CIP 110805 / LMG 28347 / Deep ecotype), this protein is Small ribosomal subunit protein uS11.